Reading from the N-terminus, the 80-residue chain is U-scoloptoxin(15)-Er1a (80 aa).

The signal sequence occupies residues 1 to 22 (MQNKGVVLTLFLVVSMAIVISS).

This sequence belongs to the scoloptoxin-15 family. In terms of processing, contains 2 disulfide bonds. As to expression, expressed by the venom gland.

Its subcellular location is the secreted. The chain is U-scoloptoxin(15)-Er1a from Ethmostigmus rubripes (Giant centipede).